The primary structure comprises 187 residues: Orotate phosphoribosyltransferase (187 aa).

Residues R99, K100, K103, H105, and D125–S133 contribute to the 5-phospho-alpha-D-ribose 1-diphosphate site. The orotate site is built by T129 and R157.

The protein belongs to the purine/pyrimidine phosphoribosyltransferase family. PyrE subfamily. In terms of assembly, homodimer. Mg(2+) serves as cofactor.

The catalysed reaction is orotidine 5'-phosphate + diphosphate = orotate + 5-phospho-alpha-D-ribose 1-diphosphate. Its pathway is pyrimidine metabolism; UMP biosynthesis via de novo pathway; UMP from orotate: step 1/2. Functionally, catalyzes the transfer of a ribosyl phosphate group from 5-phosphoribose 1-diphosphate to orotate, leading to the formation of orotidine monophosphate (OMP). In Leptospira borgpetersenii serovar Hardjo-bovis (strain L550), this protein is Orotate phosphoribosyltransferase.